The chain runs to 307 residues: Pantothenate kinase (307 aa).

90–97 is an ATP binding site; the sequence is GSVAVGKS.

Belongs to the prokaryotic pantothenate kinase family.

The protein localises to the cytoplasm. The enzyme catalyses (R)-pantothenate + ATP = (R)-4'-phosphopantothenate + ADP + H(+). It participates in cofactor biosynthesis; coenzyme A biosynthesis; CoA from (R)-pantothenate: step 1/5. The polypeptide is Pantothenate kinase (Levilactobacillus brevis (strain ATCC 367 / BCRC 12310 / CIP 105137 / JCM 1170 / LMG 11437 / NCIMB 947 / NCTC 947) (Lactobacillus brevis)).